The sequence spans 216 residues: Ras-related protein RABE1d (216 aa).

Residue 22 to 29 (GDSGVGKS) coordinates GTP. Positions 44–52 (FITTIGIDF) match the Effector region motif. GTP-binding positions include 70–74 (DTAGQ), 128–131 (NKAD), and 159–160 (SA). A disordered region spans residues 196–216 (TKQDTAASSSTAEKSACCSYV). Positions 200–216 (TAASSSTAEKSACCSYV) are enriched in low complexity. 2 S-geranylgeranyl cysteine lipidation sites follow: Cys212 and Cys213.

The protein belongs to the small GTPase superfamily. Rab family. As to quaternary structure, interacts with PI5K2.

It is found in the golgi apparatus membrane. The protein localises to the cell membrane. In terms of biological role, involved in membrane trafficking from the Golgi to the plasma membrane. The protein is Ras-related protein RABE1d (RABE1D) of Arabidopsis thaliana (Mouse-ear cress).